The following is a 355-amino-acid chain: 3-dehydroquinate synthase (355 aa).

Residues 71 to 76 (EGEERK), 105 to 109 (GVVGD), 129 to 130 (TS), Lys142, and Lys151 each bind NAD(+). Zn(2+) contacts are provided by Glu184, His246, and His263.

This sequence belongs to the sugar phosphate cyclases superfamily. Dehydroquinate synthase family. Requires Co(2+) as cofactor. Zn(2+) serves as cofactor. NAD(+) is required as a cofactor.

It localises to the cytoplasm. It catalyses the reaction 7-phospho-2-dehydro-3-deoxy-D-arabino-heptonate = 3-dehydroquinate + phosphate. The protein operates within metabolic intermediate biosynthesis; chorismate biosynthesis; chorismate from D-erythrose 4-phosphate and phosphoenolpyruvate: step 2/7. Catalyzes the conversion of 3-deoxy-D-arabino-heptulosonate 7-phosphate (DAHP) to dehydroquinate (DHQ). In Streptococcus pneumoniae (strain JJA), this protein is 3-dehydroquinate synthase.